A 219-amino-acid chain; its full sequence is MPPRPRFDRRAPVRELPNINDRINYPKLRVVDADGTQLGVINREEALDVAKDRELDLVLVSEKADPPVCRIMDYGKFKFEQEKKAKEAKKKSHQTEVKEVKMRYKIDQHDYNVRIGQAVRFLKAGDKVKCTVIFRGREIQHTALAETLLRRMAKDLEEQAEIQQAPKREGRNMIMFLTPRKTPLIKTDKENQIPTRAVRTITAPPRATAAAKTQLNKDQ.

It belongs to the IF-3 family. As to quaternary structure, monomer.

The protein localises to the cytoplasm. IF-3 binds to the 30S ribosomal subunit and shifts the equilibrium between 70S ribosomes and their 50S and 30S subunits in favor of the free subunits, thus enhancing the availability of 30S subunits on which protein synthesis initiation begins. The polypeptide is Translation initiation factor IF-3 (Prochlorococcus marinus (strain MIT 9313)).